A 369-amino-acid polypeptide reads, in one-letter code: Dual-specificity RNA methyltransferase RlmN (369 aa).

The active-site Proton acceptor is the E94. The Radical SAM core domain occupies 113–346 (ESEKWTMCLS…CTIRESRGID (234 aa)). C120 and C351 form a disulfide bridge. Residues C127, C131, and C134 each coordinate [4Fe-4S] cluster. Residues 177 to 178 (GE), S209, 232 to 234 (SLH), and N308 each bind S-adenosyl-L-methionine. The active-site S-methylcysteine intermediate is C351.

This sequence belongs to the radical SAM superfamily. RlmN family. [4Fe-4S] cluster serves as cofactor.

It localises to the cytoplasm. The catalysed reaction is adenosine(2503) in 23S rRNA + 2 reduced [2Fe-2S]-[ferredoxin] + 2 S-adenosyl-L-methionine = 2-methyladenosine(2503) in 23S rRNA + 5'-deoxyadenosine + L-methionine + 2 oxidized [2Fe-2S]-[ferredoxin] + S-adenosyl-L-homocysteine. It carries out the reaction adenosine(37) in tRNA + 2 reduced [2Fe-2S]-[ferredoxin] + 2 S-adenosyl-L-methionine = 2-methyladenosine(37) in tRNA + 5'-deoxyadenosine + L-methionine + 2 oxidized [2Fe-2S]-[ferredoxin] + S-adenosyl-L-homocysteine. Functionally, specifically methylates position 2 of adenine 2503 in 23S rRNA and position 2 of adenine 37 in tRNAs. m2A2503 modification seems to play a crucial role in the proofreading step occurring at the peptidyl transferase center and thus would serve to optimize ribosomal fidelity. This is Dual-specificity RNA methyltransferase RlmN from Helicobacter hepaticus (strain ATCC 51449 / 3B1).